The primary structure comprises 218 residues: Urease accessory protein UreG (218 aa).

22 to 29 serves as a coordination point for GTP; that stretch reads GPVGSGKT.

Belongs to the SIMIBI class G3E GTPase family. UreG subfamily. As to quaternary structure, homodimer. UreD, UreF and UreG form a complex that acts as a GTP-hydrolysis-dependent molecular chaperone, activating the urease apoprotein by helping to assemble the nickel containing metallocenter of UreC. The UreE protein probably delivers the nickel.

Its subcellular location is the cytoplasm. In terms of biological role, facilitates the functional incorporation of the urease nickel metallocenter. This process requires GTP hydrolysis, probably effectuated by UreG. This Polaromonas naphthalenivorans (strain CJ2) protein is Urease accessory protein UreG.